The chain runs to 212 residues: Leucyl/phenylalanyl-tRNA--protein transferase (212 aa).

This sequence belongs to the L/F-transferase family.

The protein localises to the cytoplasm. It carries out the reaction N-terminal L-lysyl-[protein] + L-leucyl-tRNA(Leu) = N-terminal L-leucyl-L-lysyl-[protein] + tRNA(Leu) + H(+). The enzyme catalyses N-terminal L-arginyl-[protein] + L-leucyl-tRNA(Leu) = N-terminal L-leucyl-L-arginyl-[protein] + tRNA(Leu) + H(+). The catalysed reaction is L-phenylalanyl-tRNA(Phe) + an N-terminal L-alpha-aminoacyl-[protein] = an N-terminal L-phenylalanyl-L-alpha-aminoacyl-[protein] + tRNA(Phe). Functions in the N-end rule pathway of protein degradation where it conjugates Leu, Phe and, less efficiently, Met from aminoacyl-tRNAs to the N-termini of proteins containing an N-terminal arginine or lysine. This is Leucyl/phenylalanyl-tRNA--protein transferase from Jannaschia sp. (strain CCS1).